Reading from the N-terminus, the 299-residue chain is ATP phosphoribosyltransferase (299 aa).

This sequence belongs to the ATP phosphoribosyltransferase family. Long subfamily. It depends on Mg(2+) as a cofactor.

It localises to the cytoplasm. It carries out the reaction 1-(5-phospho-beta-D-ribosyl)-ATP + diphosphate = 5-phospho-alpha-D-ribose 1-diphosphate + ATP. Its pathway is amino-acid biosynthesis; L-histidine biosynthesis; L-histidine from 5-phospho-alpha-D-ribose 1-diphosphate: step 1/9. Its activity is regulated as follows. Feedback inhibited by histidine. In terms of biological role, catalyzes the condensation of ATP and 5-phosphoribose 1-diphosphate to form N'-(5'-phosphoribosyl)-ATP (PR-ATP). Has a crucial role in the pathway because the rate of histidine biosynthesis seems to be controlled primarily by regulation of HisG enzymatic activity. The sequence is that of ATP phosphoribosyltransferase from Shewanella pealeana (strain ATCC 700345 / ANG-SQ1).